Reading from the N-terminus, the 303-residue chain is MNKVLVIAGPTAVGKTEISIEIARRINGEIICMDSRQIYSHLIIGTATPDEETKKLVPHHLYGSVDPRTHFTAFDYKKLAEKKIGEVLNRGNTPVLVGGTGLYLDALRKGFLNVKSDYGLRTYLRKLETNNPGVLRKILVDLDPQRAQKIHPNDLKRIIRAIEIYVITGIKMGEIVKENRQDENSFDYHIIVLDRERQELHERINKRVHQMIDEGLIEEVRNLLSLGYSTTLNALNTIGYKEVVQYLYGKIDFNEMVHQIKVNTRNYARRQIIYFRKIEGAKWINLSKTSQEEVVDQILSEFI.

9 to 16 (GPTAVGKT) is a binding site for ATP. 11-16 (TAVGKT) is a substrate binding site. The segment at 34–37 (DSRQ) is interaction with substrate tRNA.

This sequence belongs to the IPP transferase family. As to quaternary structure, monomer. The cofactor is Mg(2+).

The catalysed reaction is adenosine(37) in tRNA + dimethylallyl diphosphate = N(6)-dimethylallyladenosine(37) in tRNA + diphosphate. In terms of biological role, catalyzes the transfer of a dimethylallyl group onto the adenine at position 37 in tRNAs that read codons beginning with uridine, leading to the formation of N6-(dimethylallyl)adenosine (i(6)A). The chain is tRNA dimethylallyltransferase from Petrotoga mobilis (strain DSM 10674 / SJ95).